Reading from the N-terminus, the 168-residue chain is Quinol oxidase subunit 2 (168 aa).

Residues 9–31 form a helical membrane-spanning segment; the sequence is EVWFIVMLVLVLIFFSWNVYYLS.

This sequence belongs to the cytochrome c oxidase subunit 2 family.

The protein localises to the cell membrane. The enzyme catalyses 2 a quinol + O2 = 2 a quinone + 2 H2O. Functionally, the terminal oxidase is the component of the respiratory chain that catalyzes the reduction of oxygen to water. Subunits 1-3 form the functional core of the enzyme complex. In terms of biological role, subunit 2 transfers the electrons from caldariella quinol to the bimetallic center of the catalytic subunit 1 that is formed by heme A3 and Cu(B). This Sulfolobus acidocaldarius (strain ATCC 33909 / DSM 639 / JCM 8929 / NBRC 15157 / NCIMB 11770) protein is Quinol oxidase subunit 2 (soxA).